The primary structure comprises 92 residues: UPF0213 protein H16_B0156 (92 aa).

In terms of domain architecture, GIY-YIG spans 5-80 (SAWYLYLLEC…KRLSSTQKRA (76 aa)).

This sequence belongs to the UPF0213 family.

In Cupriavidus necator (strain ATCC 17699 / DSM 428 / KCTC 22496 / NCIMB 10442 / H16 / Stanier 337) (Ralstonia eutropha), this protein is UPF0213 protein H16_B0156.